A 605-amino-acid polypeptide reads, in one-letter code: DNA primase (605 aa).

Residues 39-63 (CPFHHERTPSFHVVPDKKMYYCFGC) form a CHC2-type zinc finger. Residues 257 to 338 (RAAIICEGYM…EVRIVELNGG (82 aa)) enclose the Toprim domain. Mg(2+) is bound by residues Glu-263, Asp-307, and Asp-309.

Belongs to the DnaG primase family. In terms of assembly, monomer. Interacts with DnaB. Zn(2+) serves as cofactor. Requires Mg(2+) as cofactor.

It catalyses the reaction ssDNA + n NTP = ssDNA/pppN(pN)n-1 hybrid + (n-1) diphosphate.. In terms of biological role, RNA polymerase that catalyzes the synthesis of short RNA molecules used as primers for DNA polymerase during DNA replication. This chain is DNA primase, found in Treponema pallidum (strain Nichols).